Reading from the N-terminus, the 439-residue chain is Protein pop-1 (439 aa).

The tract at residues 1–38 (MMADEELGDEVKVFRRDEDADDDPMISGETSEQQLADD) is disordered. Residues 9-18 (DEVKVFRRDE) are compositionally biased toward basic and acidic residues. Positions 87–138 (SGLPIMFPMVVPQYLSPNPNINMMNMMTMRAAMAGAPLSPAFPAMFSPNPLF) are involved in nuclear asymmetry. At S125 the chain carries Phosphoserine; by LIT1. Positions 199–269 (IKKPLNAFMW…SHKEKYPQWS (71 aa)) form a DNA-binding region, HMG box. The span at 254–265 (AKKDRESHKEKY) shows a compositional bias: basic and acidic residues. Disordered regions lie at residues 254–298 (AKKD…NNDQ), 329–365 (RSGSELNDGHDGRGTSGGCSSSSESSSPNNNQPMPMN), and 385–439 (SAHL…VCTL). Basic residues predominate over residues 277-286 (NKKKPKRKRD). 2 stretches are compositionally biased toward low complexity: residues 346 to 365 (GCSSSSESSSPNNNQPMPMN) and 385 to 400 (SAHLASSHSTGSSGTS). Over residues 409-420 (SESDVDEDEDID) the composition is skewed to acidic residues. Positions 422-439 (TITQQTQEYIMQESVCTL) are enriched in polar residues.

The protein belongs to the TCF/LEF family. Interacts with hda-1. Interacts with bar-1. Interacts with par-5; the interaction is direct and is enhanced by lit-1-mediated pop-1 phosphorylation. The interaction also leads to the subsequent nuclear export of pop-1. Interacts (when phosphorylated on Ser-125) with lit-1; the interaction is dependent on the beta-catenin-lit-1 complex. Interacts with wrm-1. Phosphorylated on Ser-125 by lit-1 in the beta-catenin-lit-1 complex. Phosphorylation promotes the interaction of pop-1 and par-5 and the subsequent translocation of pop-1 from the nucleus to the cytoplasm.

The protein localises to the nucleus. The protein resides in the cytoplasm. In terms of biological role, part of the Wnt signaling pathway essential for the specification of the mesodermal cell fate in early embryos. Required for asymmetrical division of somatic gonadal precursor descendants which initiate axis formation required to control organ shape. Similarly, involved in asymmetrical division of seam cells, a stem cell-like lineage. Represses expression of target genes via its interaction with hda-1 histone deacetylase. Required for specification of the M lineage-derived coelomocyte and sex myoblast fate. Regulates coelomocyte fate by positively regulating proliferation and ceh-34 and possibly eya-1 expression in M.dlpa and M.drpa precursors. The polypeptide is Protein pop-1 (Caenorhabditis briggsae).